Reading from the N-terminus, the 354-residue chain is Lysine racemase (354 aa).

Lys-36 bears the N6-(pyridoxal phosphate)lysine mark.

The protein belongs to the alanine racemase family. As to quaternary structure, homodimer. Pyridoxal 5'-phosphate is required as a cofactor.

The enzyme catalyses L-lysine = D-lysine. It carries out the reaction L-ornithine = D-ornithine. It participates in cell wall biogenesis; peptidoglycan biosynthesis. In terms of biological role, catalyzes the interconversion of D-lysine and L-lysine. Has also high activity toward ornithine, and weaker activity toward alanine. Contributes to production of D-lysine and D-alanine for use as peptidoglycan components. The sequence is that of Lysine racemase from Thermotoga maritima (strain ATCC 43589 / DSM 3109 / JCM 10099 / NBRC 100826 / MSB8).